We begin with the raw amino-acid sequence, 665 residues long: tRNA 5-methylaminomethyl-2-thiouridine biosynthesis bifunctional protein MnmC (665 aa).

Residues 1–243 (MSQTSLHHAR…KWAMLAGERV (243 aa)) are tRNA (mnm(5)s(2)U34)-methyltransferase. An FAD-dependent cmnm(5)s(2)U34 oxidoreductase region spans residues 268 to 665 (IGGGIASAMT…RKLLKGKPLN (398 aa)).

The protein in the N-terminal section; belongs to the methyltransferase superfamily. tRNA (mnm(5)s(2)U34)-methyltransferase family. This sequence in the C-terminal section; belongs to the DAO family. FAD serves as cofactor.

It is found in the cytoplasm. The catalysed reaction is 5-aminomethyl-2-thiouridine(34) in tRNA + S-adenosyl-L-methionine = 5-methylaminomethyl-2-thiouridine(34) in tRNA + S-adenosyl-L-homocysteine + H(+). In terms of biological role, catalyzes the last two steps in the biosynthesis of 5-methylaminomethyl-2-thiouridine (mnm(5)s(2)U) at the wobble position (U34) in tRNA. Catalyzes the FAD-dependent demodification of cmnm(5)s(2)U34 to nm(5)s(2)U34, followed by the transfer of a methyl group from S-adenosyl-L-methionine to nm(5)s(2)U34, to form mnm(5)s(2)U34. This chain is tRNA 5-methylaminomethyl-2-thiouridine biosynthesis bifunctional protein MnmC, found in Aeromonas salmonicida (strain A449).